We begin with the raw amino-acid sequence, 507 residues long: ATP synthase subunit alpha, chloroplastic (507 aa).

170–177 (GDRQTGKT) lines the ATP pocket. Phosphoserine is present on serine 383.

The protein belongs to the ATPase alpha/beta chains family. F-type ATPases have 2 components, CF(1) - the catalytic core - and CF(0) - the membrane proton channel. CF(1) has five subunits: alpha(3), beta(3), gamma(1), delta(1), epsilon(1). CF(0) has four main subunits: a, b, b' and c. Post-translationally, only phosphorylated in mesophyll cells, and only when cells are grown under high rather than low light regimes (70 vs 900 umol photons/m-2/s).

The protein localises to the plastid. The protein resides in the chloroplast thylakoid membrane. The enzyme catalyses ATP + H2O + 4 H(+)(in) = ADP + phosphate + 5 H(+)(out). Functionally, produces ATP from ADP in the presence of a proton gradient across the membrane. The alpha chain is a regulatory subunit. The chain is ATP synthase subunit alpha, chloroplastic from Zea mays (Maize).